Consider the following 223-residue polypeptide: Cuticular glutathione peroxidase (223 aa).

Residues 1 to 19 form the signal peptide; sequence MSAQLLILSHMVLLQLIVA. An N-linked (GlcNAc...) asparagine glycan is attached at asparagine 39. Cysteine 74 is a catalytic residue. An N-linked (GlcNAc...) asparagine glycan is attached at asparagine 92.

The protein belongs to the glutathione peroxidase family. In terms of assembly, homotetramer.

The protein resides in the secreted. It carries out the reaction 2 glutathione + H2O2 = glutathione disulfide + 2 H2O. Could inhibit the oxidative burst of leukocytes and neutralize the secondary products of lipid peroxidation, thus providing the resistance of these parasites to immune effector mechanisms and their persistence in the mammalian host. It may also be involved in the formation of cross-linking residues such as dityrosine, trityrosine and isotrityrosine identified in cuticular collagen. Highly cross-linked external cortex may also serve to protect the parasite from immune attack. The chain is Cuticular glutathione peroxidase from Brugia malayi (Filarial nematode worm).